The sequence spans 127 residues: Aspartate 1-decarboxylase (127 aa).

The Schiff-base intermediate with substrate; via pyruvic acid role is filled by S25. The residue at position 25 (S25) is a Pyruvic acid (Ser). Substrate is bound at residue T57. The active-site Proton donor is the Y58. 73-75 (GAA) is a substrate binding site.

The protein belongs to the PanD family. In terms of assembly, heterooctamer of four alpha and four beta subunits. Pyruvate serves as cofactor. Is synthesized initially as an inactive proenzyme, which is activated by self-cleavage at a specific serine bond to produce a beta-subunit with a hydroxyl group at its C-terminus and an alpha-subunit with a pyruvoyl group at its N-terminus.

The protein resides in the cytoplasm. It catalyses the reaction L-aspartate + H(+) = beta-alanine + CO2. It functions in the pathway cofactor biosynthesis; (R)-pantothenate biosynthesis; beta-alanine from L-aspartate: step 1/1. Its function is as follows. Catalyzes the pyruvoyl-dependent decarboxylation of aspartate to produce beta-alanine. This is Aspartate 1-decarboxylase from Geobacillus sp. (strain WCH70).